Consider the following 262-residue polypeptide: Sperm microtubule inner protein 6 (262 aa).

Belongs to the SPMIP6 family. As to quaternary structure, microtubule inner protein component of sperm flagellar doublet microtubules. Interacts with alpha-tubulin.

It localises to the cytoplasm. Its subcellular location is the cytoskeleton. The protein localises to the nucleus. The protein resides in the mitochondrion. It is found in the flagellum axoneme. Its function is as follows. May participate in intramanchette transport and midpiece formation of the sperm tail. May play a potential role in somatic cell proliferation. The protein is Sperm microtubule inner protein 6 (SPMIP6) of Macaca fascicularis (Crab-eating macaque).